A 300-amino-acid chain; its full sequence is N-acetylmannosamine kinase (300 aa).

Residues 5–12 and 132–139 each bind ATP; these read ALDIGGTK and GVGGGIVL. 4 residues coordinate Zn(2+): His-156, Cys-166, Cys-168, and Cys-173.

Belongs to the ROK (NagC/XylR) family. NanK subfamily. Homodimer.

The enzyme catalyses an N-acyl-D-mannosamine + ATP = an N-acyl-D-mannosamine 6-phosphate + ADP + H(+). Its pathway is amino-sugar metabolism; N-acetylneuraminate degradation; D-fructose 6-phosphate from N-acetylneuraminate: step 2/5. In terms of biological role, catalyzes the phosphorylation of N-acetylmannosamine (ManNAc) to ManNAc-6-P. The chain is N-acetylmannosamine kinase from Haemophilus influenzae (strain 86-028NP).